The sequence spans 239 residues: MKFYDLMCKAAQDVGLELSKEQYEKFIIYKNLLQEWNEKVNLTAITEDEDIIKKHFIDSIKAFKRDEFKEAKTLIDVGTGAGFPGIPVAIMNENIQVTLLDSLNKRVNFLNLVTEKLGLKNVVAIHSRAEDGARQKNLRESFDIATSRAVANMSVLSEFCLPYVKINGHFIALKGPAVEEEIKDSDKAITTLGGQLLDICEVEIEDTELKHNLVVVKKIKECPKVYPRKAGNVTKKPIK.

S-adenosyl-L-methionine is bound by residues Gly78, Phe83, 129–130, and Arg148; that span reads AE.

This sequence belongs to the methyltransferase superfamily. RNA methyltransferase RsmG family.

The protein localises to the cytoplasm. Its function is as follows. Specifically methylates the N7 position of a guanine in 16S rRNA. In Clostridium botulinum (strain Alaska E43 / Type E3), this protein is Ribosomal RNA small subunit methyltransferase G.